The following is a 1052-amino-acid chain: Mitotic checkpoint serine/threonine-protein kinase BUB1 beta (1052 aa).

The BUB1 N-terminal domain maps to 56-219; that stretch reads FESEIRFYSG…LEPSEPQRSS (164 aa). A Nuclear localization signal motif is present at residues 105-112; the sequence is GETRYYND. The interval 146–179 is necessary for interaction with KNL1; the sequence is AQFYISWAEEYEARENFKKADIIFQEGIERKAEP. Disordered stretches follow at residues 206 to 256 and 272 to 327; these read EEEA…NAVP and ADTA…TSIP. The D-box motif lies at 217 to 225; it reads RSSLAELKS. Lys243 is modified (N6-acetyllysine; by PCAF). Position 360 is a phosphoserine (Ser360). A disordered region spans residues 361 to 381; sequence TRKPGREEGDPLQRVQSHQQG. Ser428 is modified (phosphoserine). The disordered stretch occupies residues 496 to 552; sequence SNPREISPAENILQEQPDSKGSSMPFSIFDESLSDKKDKSPATGGPQVLNAQRRPLS. Positions 508-520 are enriched in polar residues; the sequence is LQEQPDSKGSSMP. Residues Ser535 and Ser659 each carry the phosphoserine modification. Ser665 carries the post-translational modification Phosphoserine; by PLK1. Ser686 carries the post-translational modification Phosphoserine. The Protein kinase domain occupies 756-1040; sequence VIKQEHLTCD…TISPEALLTQ (285 aa). 762–770 lines the ATP pocket; sequence LTCDDYRLF. Phosphothreonine; by PLK1 is present on Thr781. Lys784 is an ATP binding site. Asp871 acts as the Proton acceptor in catalysis. Residue Thr998 is modified to Phosphothreonine; by PLK1. Residues Ser1033 and Ser1050 each carry the phosphoserine modification.

The protein belongs to the protein kinase superfamily. Ser/Thr protein kinase family. BUB1 subfamily. In terms of assembly, interacts with CENPE. Interacts with PLK1. Part of a complex containing BUB3, CDC20 and BUB1B. Interacts with anaphase-promoting complex/cyclosome (APC/C). Interacts with KNL1. Interacts with KAT2B. Interacts with RIPK3. Interacts with the closed conformation form of MAD2L1. Interacts with CDC20. Post-translationally, proteolytically cleaved by caspase-3 in a cell cycle specific manner. The cleavage might be involved in the durability of the cell cycle delay. Acetylation at Lys-243 regulates its degradation and timing in anaphase entry. In terms of processing, ubiquitinated. Degraded by the proteasome. Ubiquitinated by UBR5, promoting disassembly of the mitotic checkpoint complex from the APC/C complex. Post-translationally, sumoylated with SUMO2 and SUMO3. The sumoylation mediates the association with CENPE at the kinetochore. Autophosphorylated in vitro. Intramolecular autophosphorylation stimulated by CENPE. Phosphorylated during mitosis and hyperphosphorylated in mitotically arrested cells. Phosphorylation at Ser-659 and Ser-1033 occurs at kinetochores upon mitotic entry with dephosphorylation at the onset of anaphase. In terms of processing, proteolytically cleaved by caspase-3 in a cell cycle specific manner. The cleavage might be involved in the durability of the cell cycle delay. Caspase-3 cleavage is associated with abrogation of the mitotic checkpoint. The major site of cleavage is at Asp-603. Highly expressed in thymus followed by spleen.

Its subcellular location is the cytoplasm. The protein localises to the nucleus. It is found in the chromosome. It localises to the centromere. The protein resides in the kinetochore. The catalysed reaction is L-seryl-[protein] + ATP = O-phospho-L-seryl-[protein] + ADP + H(+). It catalyses the reaction L-threonyl-[protein] + ATP = O-phospho-L-threonyl-[protein] + ADP + H(+). Kinase activity stimulated by CENPE. In terms of biological role, essential component of the mitotic checkpoint. Required for normal mitosis progression and tumor suppression. The mitotic checkpoint delays anaphase until all chromosomes are properly attached to the mitotic spindle. One of its checkpoint functions is to inhibit the activity of the anaphase-promoting complex/cyclosome (APC/C) by blocking the binding of CDC20 to APC/C, independently of its kinase activity. The other is to monitor kinetochore activities that depend on the kinetochore motor CENPE. Required for kinetochore localization of CENPE. Negatively regulates PLK1 activity in interphase cells and suppresses centrosome amplification. Also implicated in triggering apoptosis in polyploid cells that exit aberrantly from mitotic arrest. Essential for tumor suppression. May play a role in regulating aging and fertility. The sequence is that of Mitotic checkpoint serine/threonine-protein kinase BUB1 beta (Bub1b) from Mus musculus (Mouse).